The following is a 987-amino-acid chain: Rho GTPase-activating protein 6 (987 aa).

Polar residues predominate over residues 1–21 (MSAQSLLHSVFSCSSPASGGT). 3 disordered regions span residues 1–60 (MSAQ…RGST), 76–117 (SRLA…SGSF), and 144–170 (GSGSASSRSPASILSSSGGGPNGIFSS). The residue at position 37 (serine 37) is a Phosphoserine. Over residues 44-57 (GGCGSEMGAEGGLR) the composition is skewed to gly residues. Residues 100–115 (SSFSTPSTPQEKSPSG) show a composition bias toward polar residues. Positions 144 to 159 (GSGSASSRSPASILSS) are enriched in low complexity. The residue at position 265 (serine 265) is a Phosphoserine. The tract at residues 324-363 (KQNKELSSSNSSLSSTSETPNESTSPNTPEPAPRARRRGA) is disordered. Residues 328–350 (ELSSSNSSLSSTSETPNESTSPN) are compositionally biased toward low complexity. Positions 344–354 (NESTSPNTPEP) match the SH3-binding motif. Serine 365 carries the phosphoserine modification. The region spanning 403–604 (LSLNPIYRQV…KMIENYEALF (202 aa)) is the Rho-GAP domain. The interval 641 to 676 (DILQTEVSFSMGGRHSSTDSNKASSGDISPYDNNSP) is disordered. The span at 658 to 676 (TDSNKASSGDISPYDNNSP) shows a compositional bias: polar residues. Serine 669, serine 675, serine 682, serine 713, serine 758, serine 776, serine 781, serine 790, and serine 824 each carry phosphoserine. The disordered stretch occupies residues 709–731 (GHLSSPKSKSRESSPGPRLGKEM). Disordered stretches follow at residues 825–847 (TPHIQDGSRGTRRPAASSDPFLS) and 863–953 (WLQS…QDKQ). Residues 939–948 (LSSAYSLSAS) are compositionally biased toward low complexity. Phosphoserine is present on residues serine 941 and serine 944.

As to expression, expressed in retina and lung.

It is found in the cytoplasm. Its function is as follows. GTPase activator for the Rho-type GTPases by converting them to an inactive GDP-bound state. Could regulate the interactions of signaling molecules with the actin cytoskeleton. Promotes continuous elongation of cytoplasmic processes during cell motility and simultaneous retraction of the cell body changing the cell morphology. The polypeptide is Rho GTPase-activating protein 6 (Arhgap6) (Mus musculus (Mouse)).